The following is a 156-amino-acid chain: uncharacterized protein (156 aa).

Transmembrane regions (helical) follow at residues 21-41 (GVLF…AISL), 54-74 (TICS…IDFA), and 80-100 (SVLV…WALF).

It is found in the membrane. This is an uncharacterized protein from Saccharomyces cerevisiae (strain ATCC 204508 / S288c) (Baker's yeast).